Reading from the N-terminus, the 146-residue chain is VEWTDKERAIITDIFSHMDYDDIGPKALSRCLIVYPWTQRHFSGFGNLYNAEAIIGNANVAAHGIKVLHGLDRGVKNMDNIAATYAELSTLHSEKLHVDPDNFKLLSDCITIVVAAKLGHAFTAETQGALQKFLAVVVSALGKQYH.

Residues 2–146 (EWTDKERAII…VVSALGKQYH (145 aa)) form the Globin domain. Residues His63 and His92 each contribute to the heme b site.

This sequence belongs to the globin family. As to quaternary structure, hb 1 is a heterotetramer of two alpha-1 and two beta-1 chains. In terms of tissue distribution, red blood cells.

In terms of biological role, involved in oxygen transport from gills to the various peripheral tissues. This is Hemoglobin subunit beta-1 (hbb1) from Gobionotothen gibberifrons (Humped rockcod).